The following is a 61-amino-acid chain: Large ribosomal subunit protein bL28 (61 aa).

The protein belongs to the bacterial ribosomal protein bL28 family.

The polypeptide is Large ribosomal subunit protein bL28 (Geobacillus kaustophilus (strain HTA426)).